The following is a 324-amino-acid chain: 4-hydroxy-3-methylbut-2-enyl diphosphate reductase (324 aa).

Cysteine 13 is a [4Fe-4S] cluster binding site. (2E)-4-hydroxy-3-methylbut-2-enyl diphosphate contacts are provided by histidine 41 and histidine 75. The dimethylallyl diphosphate site is built by histidine 41 and histidine 75. The isopentenyl diphosphate site is built by histidine 41 and histidine 75. Position 97 (cysteine 97) interacts with [4Fe-4S] cluster. Histidine 125 lines the (2E)-4-hydroxy-3-methylbut-2-enyl diphosphate pocket. Residue histidine 125 participates in dimethylallyl diphosphate binding. Histidine 125 serves as a coordination point for isopentenyl diphosphate. Catalysis depends on glutamate 127, which acts as the Proton donor. Threonine 168 lines the (2E)-4-hydroxy-3-methylbut-2-enyl diphosphate pocket. Cysteine 225 is a binding site for [4Fe-4S] cluster. Serine 253, serine 254, asparagine 255, and serine 302 together coordinate (2E)-4-hydroxy-3-methylbut-2-enyl diphosphate. The dimethylallyl diphosphate site is built by serine 253, serine 254, asparagine 255, and serine 302. Positions 253, 254, 255, and 302 each coordinate isopentenyl diphosphate.

Belongs to the IspH family. [4Fe-4S] cluster is required as a cofactor.

It carries out the reaction isopentenyl diphosphate + 2 oxidized [2Fe-2S]-[ferredoxin] + H2O = (2E)-4-hydroxy-3-methylbut-2-enyl diphosphate + 2 reduced [2Fe-2S]-[ferredoxin] + 2 H(+). The enzyme catalyses dimethylallyl diphosphate + 2 oxidized [2Fe-2S]-[ferredoxin] + H2O = (2E)-4-hydroxy-3-methylbut-2-enyl diphosphate + 2 reduced [2Fe-2S]-[ferredoxin] + 2 H(+). The protein operates within isoprenoid biosynthesis; dimethylallyl diphosphate biosynthesis; dimethylallyl diphosphate from (2E)-4-hydroxy-3-methylbutenyl diphosphate: step 1/1. It participates in isoprenoid biosynthesis; isopentenyl diphosphate biosynthesis via DXP pathway; isopentenyl diphosphate from 1-deoxy-D-xylulose 5-phosphate: step 6/6. In terms of biological role, catalyzes the conversion of 1-hydroxy-2-methyl-2-(E)-butenyl 4-diphosphate (HMBPP) into a mixture of isopentenyl diphosphate (IPP) and dimethylallyl diphosphate (DMAPP). Acts in the terminal step of the DOXP/MEP pathway for isoprenoid precursor biosynthesis. In Chlorobium limicola (strain DSM 245 / NBRC 103803 / 6330), this protein is 4-hydroxy-3-methylbut-2-enyl diphosphate reductase.